The following is a 309-amino-acid chain: Fructosamine-3-kinase (309 aa).

Met1 carries the post-translational modification N-acetylmethionine. 89 to 91 (EHL) is a binding site for ATP. Asp217 acts as the Proton acceptor in catalysis.

This sequence belongs to the fructosamine kinase family. As to quaternary structure, monomer. Expressed in red blood cells, brain, heart, kidney and muscle. Lower expression is observed in liver. Not expressed in lung, spleen, testis and thymus.

It carries out the reaction N(6)-(D-fructosyl)-L-lysyl-[protein] + ATP = N(6)-(3-O-phospho-D-fructosyl)-L-lysyl-[protein] + ADP + H(+). The catalysed reaction is N(6)-D-ribulosyl-L-lysyl-[protein] + ATP = N(6)-(3-O-phospho-D-ribulosyl)-L-lysyl-[protein] + ADP + H(+). The enzyme catalyses N(6)-(D-psicosyl)-L-lysyl-[protein] + ATP = N(6)-(3-O-phospho-D-psicosyl)-L-lysyl-[protein] + ADP + H(+). Fructosamine-3-kinase involved in protein deglycation by mediating phosphorylation of fructoselysine residues on glycated proteins, to generate fructoselysine-3 phosphate. Fructoselysine-3 phosphate adducts are unstable and decompose under physiological conditions. Involved in intracellular deglycation in erythrocytes and pancreatic islets. Involved in the response to oxidative stress by mediating deglycation of NFE2L2/NRF2, glycation impairing NFE2L2/NRF2 function. Also able to phosphorylate psicosamines and ribulosamines. The protein is Fructosamine-3-kinase of Mus musculus (Mouse).